A 523-amino-acid polypeptide reads, in one-letter code: 2-isopropylmalate synthase (523 aa).

In terms of domain architecture, Pyruvate carboxyltransferase spans 5–267 (VIIFDTTLRD…HTAINHQEIW (263 aa)). 4 residues coordinate Mn(2+): Asp14, His202, His204, and Asn238. Residues 392–523 (RLDYFSVQSG…QHNENNKETV (132 aa)) form a regulatory domain region.

The protein belongs to the alpha-IPM synthase/homocitrate synthase family. LeuA type 1 subfamily. Homodimer. Mn(2+) serves as cofactor.

The protein resides in the cytoplasm. It carries out the reaction 3-methyl-2-oxobutanoate + acetyl-CoA + H2O = (2S)-2-isopropylmalate + CoA + H(+). It participates in amino-acid biosynthesis; L-leucine biosynthesis; L-leucine from 3-methyl-2-oxobutanoate: step 1/4. In terms of biological role, catalyzes the condensation of the acetyl group of acetyl-CoA with 3-methyl-2-oxobutanoate (2-ketoisovalerate) to form 3-carboxy-3-hydroxy-4-methylpentanoate (2-isopropylmalate). This chain is 2-isopropylmalate synthase, found in Shigella flexneri serotype 5b (strain 8401).